The primary structure comprises 559 residues: T-complex protein 1 subunit gamma (559 aa).

The cysteines at positions 369 and 375 are disulfide-linked. Residues 537–559 are disordered; that stretch reads GGASVTDGNGQEIPETFGDARDG.

It belongs to the TCP-1 chaperonin family. As to quaternary structure, heterooligomeric complex of about 850 to 900 kDa that forms two stacked rings, 12 to 16 nm in diameter.

The protein localises to the cytoplasm. Molecular chaperone; assists the folding of proteins upon ATP hydrolysis. Known to play a role, in vitro, in the folding of actin and tubulin. The sequence is that of T-complex protein 1 subunit gamma from Tetrahymena pyriformis.